A 495-amino-acid polypeptide reads, in one-letter code: Maintenance of mitochondrial morphology protein 1 (495 aa).

The Lumenal portion of the chain corresponds to 1–22 (MALQQHEPAPFAPQSSLSFTQG). Residues 23–43 (FLLGQLSVVLLIGAFIKFFIF) form a helical membrane-spanning segment. Residues 44 to 495 (GEAPPPPSRG…PVGTPGIPDN (452 aa)) are Cytoplasmic-facing. 4 disordered regions span residues 63–94 (YSSV…PSTS), 269–320 (ASTE…SPKS), 382–428 (WPRM…EPEG), and 440–495 (GLGA…IPDN). 2 stretches are compositionally biased toward polar residues: residues 65–74 (SVYSPPQDSQ) and 82–94 (STSN…PSTS). The SMP-LTD domain occupies 128–379 (QPESLDWFNV…EPRVQVVGLP (252 aa)). Positions 271–289 (TEPPEPLQTPAGSPAPPTS) are enriched in pro residues. Residues 418–428 (FSDDHGREPEG) show a composition bias toward basic and acidic residues. Residues 458-469 (RSSSMTRQQSGG) are compositionally biased toward polar residues.

Belongs to the MMM1 family. As to quaternary structure, homodimer. Component of the ER-mitochondria encounter structure (ERMES) or MDM complex, composed of mmm1, mdm10, mdm12 and mdm34. An MMM1 homodimer associates with one molecule of mdm12 on each side in a pairwise head-to-tail manner, and the SMP-LTD domains of mmm1 and mdm12 generate a continuous hydrophobic tunnel for phospholipid trafficking.

It localises to the endoplasmic reticulum membrane. Component of the ERMES/MDM complex, which serves as a molecular tether to connect the endoplasmic reticulum (ER) and mitochondria. Components of this complex are involved in the control of mitochondrial shape and protein biogenesis, and function in nonvesicular lipid trafficking between the ER and mitochondria. The mdm12-mmm1 subcomplex functions in the major beta-barrel assembly pathway that is responsible for biogenesis of all outer membrane beta-barrel proteins, and acts in a late step after the SAM complex. The mdm10-mdm12-mmm1 subcomplex further acts in the TOM40-specific pathway after the action of the mdm12-mmm1 complex. Essential for establishing and maintaining the structure of mitochondria and maintenance of mtDNA nucleoids. The sequence is that of Maintenance of mitochondrial morphology protein 1 from Penicillium rubens (strain ATCC 28089 / DSM 1075 / NRRL 1951 / Wisconsin 54-1255) (Penicillium chrysogenum).